The primary structure comprises 428 residues: Serine--tRNA ligase (428 aa).

233–235 (TAE) is an L-serine binding site. 264–266 (RRE) contacts ATP. Glutamate 287 provides a ligand contact to L-serine. 351–354 (EVSS) serves as a coordination point for ATP. Serine 387 lines the L-serine pocket.

The protein belongs to the class-II aminoacyl-tRNA synthetase family. Type-1 seryl-tRNA synthetase subfamily. In terms of assembly, homodimer. The tRNA molecule binds across the dimer.

It localises to the cytoplasm. It carries out the reaction tRNA(Ser) + L-serine + ATP = L-seryl-tRNA(Ser) + AMP + diphosphate + H(+). It catalyses the reaction tRNA(Sec) + L-serine + ATP = L-seryl-tRNA(Sec) + AMP + diphosphate + H(+). It participates in aminoacyl-tRNA biosynthesis; selenocysteinyl-tRNA(Sec) biosynthesis; L-seryl-tRNA(Sec) from L-serine and tRNA(Sec): step 1/1. Functionally, catalyzes the attachment of serine to tRNA(Ser). Is also able to aminoacylate tRNA(Sec) with serine, to form the misacylated tRNA L-seryl-tRNA(Sec), which will be further converted into selenocysteinyl-tRNA(Sec). The protein is Serine--tRNA ligase of Salinibacter ruber (strain DSM 13855 / M31).